The chain runs to 96 residues: MPSNGIVRSWRRAMATMNVSLPDAMREWVEGQTQSGRYHNASEYVRDLIRRDQERADKIAHLQRLIDEGLDSGVGERSLHEIRAEARRRAGVDHEL.

The protein belongs to the ParD antitoxin family.

Antitoxin component of a type II toxin-antitoxin (TA) system. Neutralizes the effect of cognate toxin ParE4, but no other RelE or ParE toxin. The protein is Antitoxin ParD4 (parD4) of Caulobacter vibrioides (strain ATCC 19089 / CIP 103742 / CB 15) (Caulobacter crescentus).